Here is a 308-residue protein sequence, read N- to C-terminus: Zinc finger CCCH domain-containing protein 15 (308 aa).

Residues 1-21 (MENKIAPFSYSGSSAGNSSSG) are disordered. A compositionally biased stretch (low complexity) spans 9–21 (SYSGSSAGNSSSG). The stretch at 56–91 (TRLHEASLEAEALRLENTELRSMNLRLKNELNSLIR) forms a coiled coil. The tract at residues 110–190 (LSIGGNDADE…GTVTKPGTCG (81 aa)) is disordered. Residue Ser111 is modified to Phosphoserine. Residues 148–164 (RSSLPKSISVRSNGYSK) show a composition bias toward polar residues. C3H1-type zinc fingers lie at residues 222-250 (MTKT…HGIK) and 260-288 (RYKT…HSLS).

In terms of processing, phosphorylated at Ser-111 by ASK7/BIN2 in the cytoplasm in the absence of brassinosteroids (BRs). As to expression, highly expressed in secondary cell wall-forming tissues and the xylem cells of roots. Expressed predominantly in inflorescence stems, flowers and siliques. Highly expressed in the basal portion of stems, where cells are undergoing secondary cell wall thickening. Highly expressed in meiocytes and tapetum from anthers.

It localises to the cytoplasm. Its subcellular location is the nucleus. In terms of biological role, functions probably as a transcriptional factor that activates genes involved in secondary cell wall biosynthesis. Functions redudantly with C3H14 to regulate secondary cell wall formation. C3H14 and C3H15 have overlapping roles in the regulation of secondary cell wall formation and anther development. C3H14 may contribute more to secondary cell wall thickening while C3H15 could be more important in anther development. May regulate at both the transcriptional and post-transcriptional levels the expression of many genes involved in various biological processes, particularly those associated with cell wall metabolism and pollen development. Involved in the regulation of callose metabolism in male meiocytes, in integrity of newly formed microspores, and promotes male fertility. May be involved in the regulation of the callose synthesis genes CALS5 and CALS12, the potential degradation of callose walls-related genes A6 and MYB80, as well as other putative beta-1,3-glucanase genes. Negatively regulates cell elongation by inhibiting brassinosteroid (BR) signaling. Functions downstream of the BRI1 receptor as a negative regulator in the BR pathway. The protein is Zinc finger CCCH domain-containing protein 15 of Arabidopsis thaliana (Mouse-ear cress).